A 71-amino-acid chain; its full sequence is Protein SlyX homolog (71 aa).

The protein belongs to the SlyX family.

The chain is Protein SlyX homolog from Azotobacter vinelandii (strain DJ / ATCC BAA-1303).